The primary structure comprises 207 residues: Guanylate kinase (207 aa).

The Guanylate kinase-like domain occupies 5 to 184 (GNLFIVSAPS…ALADLKSIIF (180 aa)). 12–19 (APSGAGKS) serves as a coordination point for ATP.

It belongs to the guanylate kinase family.

It localises to the cytoplasm. It catalyses the reaction GMP + ATP = GDP + ADP. Functionally, essential for recycling GMP and indirectly, cGMP. The chain is Guanylate kinase from Shewanella denitrificans (strain OS217 / ATCC BAA-1090 / DSM 15013).